Consider the following 78-residue polypeptide: DNA-directed RNA polymerase subunit Rpo5 (78 aa).

It belongs to the archaeal Rpo5/eukaryotic RPB5 RNA polymerase subunit family. As to quaternary structure, part of the RNA polymerase complex.

It is found in the cytoplasm. The enzyme catalyses RNA(n) + a ribonucleoside 5'-triphosphate = RNA(n+1) + diphosphate. Its function is as follows. DNA-dependent RNA polymerase (RNAP) catalyzes the transcription of DNA into RNA using the four ribonucleoside triphosphates as substrates. In Methanococcoides burtonii (strain DSM 6242 / NBRC 107633 / OCM 468 / ACE-M), this protein is DNA-directed RNA polymerase subunit Rpo5.